The following is an 874-amino-acid chain: Bifunctional apolipoprotein N-acyltransferase/polyprenol monophosphomannose synthase (874 aa).

Residues 1–593 (MKLGAWVAAQ…GRHRATSRSY (593 aa)) form an apolipoprotein N-acyltransferase region. 5 helical membrane-spanning segments follow: residues 23–42 (TRLV…FPPR), 72–89 (YGLL…PWIG), 94–115 (PGPW…GLFA), 177–194 (VALV…IEKW), and 206–223 (AVVL…AAIV). Residues 241 to 497 (VTVAVVQGNV…PAYLDSQVRL (257 aa)) form the CN hydrolase domain. Glu-294 serves as the catalytic Proton acceptor. Lys-359 is a catalytic residue. Cys-409 serves as the catalytic Nucleophile. The helical transmembrane segment at 509–526 (PILQWILVGAAAAVVLVA) threads the bilayer. Disordered regions lie at residues 533 to 609 (FPRP…NRPS) and 852 to 874 (RARP…DVTE). A polyprenol monophosphomannose synthase region spans residues 594–874 (MTTGQPAPPA…SRVSRADVTE (281 aa)).

In the N-terminal section; belongs to the CN hydrolase family. Apolipoprotein N-acyltransferase subfamily. The protein in the C-terminal section; belongs to the glycosyltransferase 2 family.

The protein resides in the cell membrane. The catalysed reaction is N-terminal S-1,2-diacyl-sn-glyceryl-L-cysteinyl-[lipoprotein] + a glycerophospholipid = N-acyl-S-1,2-diacyl-sn-glyceryl-L-cysteinyl-[lipoprotein] + a 2-acyl-sn-glycero-3-phospholipid + H(+). It carries out the reaction a di-trans,poly-cis-dolichyl phosphate + GDP-alpha-D-mannose = a di-trans,poly-cis-dolichyl beta-D-mannosyl phosphate + GDP. Its pathway is protein modification; lipoprotein biosynthesis (N-acyl transfer). In terms of biological role, catalyzes the phospholipid dependent N-acylation of the N-terminal cysteine of apolipoprotein, the last step in lipoprotein maturation. Transfers mannose from GDP-mannose to lipid acceptors to form polyprenol monophosphomannose (PPM). PMM is an alkai-stable sugar donor which adds mannose-phosphate residues to triacylated-phosphatidyl-myo-inositol mannosides (PIM2), eventually leading to generation of the cell wall glycolipid lipoglycan modulins lipoarabinomannan (LAM) and lipomannan (LM). The chain is Bifunctional apolipoprotein N-acyltransferase/polyprenol monophosphomannose synthase from Mycobacterium bovis (strain BCG / Pasteur 1173P2).